A 419-amino-acid polypeptide reads, in one-letter code: UDP-N-acetylglucosamine 1-carboxyvinyltransferase (419 aa).

Residue 22-23 coordinates phosphoenolpyruvate; it reads KN. UDP-N-acetyl-alpha-D-glucosamine is bound at residue arginine 95. The Proton donor role is filled by cysteine 119. Cysteine 119 is modified (2-(S-cysteinyl)pyruvic acid O-phosphothioketal). UDP-N-acetyl-alpha-D-glucosamine-binding positions include 164-167, aspartate 308, and isoleucine 330; that span reads KVSV.

It belongs to the EPSP synthase family. MurA subfamily.

It is found in the cytoplasm. It catalyses the reaction phosphoenolpyruvate + UDP-N-acetyl-alpha-D-glucosamine = UDP-N-acetyl-3-O-(1-carboxyvinyl)-alpha-D-glucosamine + phosphate. It functions in the pathway cell wall biogenesis; peptidoglycan biosynthesis. Cell wall formation. Adds enolpyruvyl to UDP-N-acetylglucosamine. This chain is UDP-N-acetylglucosamine 1-carboxyvinyltransferase, found in Rickettsia africae (strain ESF-5).